Here is a 60-residue protein sequence, read N- to C-terminus: Protein translocase subunit SecE (60 aa).

The helical transmembrane segment at 37 to 57 (LLGFALVGGIGYLIHLGYIIL) threads the bilayer.

Belongs to the SecE/SEC61-gamma family. Component of the Sec protein translocase complex. Heterotrimer consisting of SecY (alpha), SecG (beta) and SecE (gamma) subunits. The heterotrimers can form oligomers, although 1 heterotrimer is thought to be able to translocate proteins. Interacts with the ribosome. May interact with SecDF, and other proteins may be involved.

Its subcellular location is the cell membrane. Functionally, essential subunit of the Sec protein translocation channel SecYEG. Clamps together the 2 halves of SecY. May contact the channel plug during translocation. The polypeptide is Protein translocase subunit SecE (Aeropyrum pernix (strain ATCC 700893 / DSM 11879 / JCM 9820 / NBRC 100138 / K1)).